The chain runs to 438 residues: GTPase Der (438 aa).

EngA-type G domains lie at 4-168 (PLVT…KSEG) and 177-352 (IKIA…DNYS). GTP-binding positions include 10–17 (GRPNVGKS), 57–61 (DTGGI), 120–123 (NKID), 183–190 (GKPNVGKS), 230–234 (DTAGL), and 295–298 (NKWD). One can recognise a KH-like domain in the interval 353–437 (KRIATGVLND…GIKMIFKERK (85 aa)).

Belongs to the TRAFAC class TrmE-Era-EngA-EngB-Septin-like GTPase superfamily. EngA (Der) GTPase family. In terms of assembly, associates with the 50S ribosomal subunit.

Functionally, GTPase that plays an essential role in the late steps of ribosome biogenesis. The protein is GTPase Der of Clostridium acetobutylicum (strain ATCC 824 / DSM 792 / JCM 1419 / IAM 19013 / LMG 5710 / NBRC 13948 / NRRL B-527 / VKM B-1787 / 2291 / W).